Here is a 241-residue protein sequence, read N- to C-terminus: Triosephosphate isomerase (241 aa).

Residue Asn9–Lys11 participates in substrate binding. Catalysis depends on His96, which acts as the Electrophile. The Proton acceptor role is filled by Glu165. Substrate is bound by residues Gly171, Ser204, and Gly225–Gly226.

The protein belongs to the triosephosphate isomerase family. As to quaternary structure, homodimer.

The protein localises to the cytoplasm. The catalysed reaction is D-glyceraldehyde 3-phosphate = dihydroxyacetone phosphate. Its pathway is carbohydrate biosynthesis; gluconeogenesis. It functions in the pathway carbohydrate degradation; glycolysis; D-glyceraldehyde 3-phosphate from glycerone phosphate: step 1/1. Involved in the gluconeogenesis. Catalyzes stereospecifically the conversion of dihydroxyacetone phosphate (DHAP) to D-glyceraldehyde-3-phosphate (G3P). The chain is Triosephosphate isomerase from Trichodesmium erythraeum (strain IMS101).